Here is a 56-residue protein sequence, read N- to C-terminus: Small ribosomal subunit protein uS14 (56 aa).

Zn(2+)-binding residues include C21, C24, C39, and C42.

This sequence belongs to the universal ribosomal protein uS14 family. The cofactor is Zn(2+).

The sequence is that of Small ribosomal subunit protein uS14 (rps29A) from Guillardia theta (Cryptophyte).